We begin with the raw amino-acid sequence, 372 residues long: D-alanine--D-alanine ligase (372 aa).

Residues 145 to 349 form the ATP-grasp domain; that stretch reads KTVLRAGGIP…CPNLLDQLIE (205 aa). Residue 176 to 231 participates in ATP binding; it reads DRWGTSELFVKAVSLGSSVATLPVKTETEFTKAVKEVFRYDDRLMVEPRIRGREIE. Residues D303, E316, and N318 each coordinate Mg(2+).

The protein belongs to the D-alanine--D-alanine ligase family. The cofactor is Mg(2+). Mn(2+) is required as a cofactor.

The protein resides in the cytoplasm. It carries out the reaction 2 D-alanine + ATP = D-alanyl-D-alanine + ADP + phosphate + H(+). It participates in cell wall biogenesis; peptidoglycan biosynthesis. Functionally, cell wall formation. This chain is D-alanine--D-alanine ligase, found in Coxiella burnetii (strain CbuK_Q154) (Coxiella burnetii (strain Q154)).